Here is a 274-residue protein sequence, read N- to C-terminus: Formamidopyrimidine-DNA glycosylase (274 aa).

Residue Pro-2 is the Schiff-base intermediate with DNA of the active site. The active-site Proton donor is the Glu-3. Catalysis depends on Lys-56, which acts as the Proton donor; for beta-elimination activity. The DNA site is built by His-89, Arg-107, and Lys-148. The segment at 233–267 (LAYGRAREMCVNCETTLENLKLGQRASVFCPQCQP) adopts an FPG-type zinc-finger fold. The Proton donor; for delta-elimination activity role is filled by Arg-257.

This sequence belongs to the FPG family. In terms of assembly, monomer. Requires Zn(2+) as cofactor.

It carries out the reaction Hydrolysis of DNA containing ring-opened 7-methylguanine residues, releasing 2,6-diamino-4-hydroxy-5-(N-methyl)formamidopyrimidine.. The catalysed reaction is 2'-deoxyribonucleotide-(2'-deoxyribose 5'-phosphate)-2'-deoxyribonucleotide-DNA = a 3'-end 2'-deoxyribonucleotide-(2,3-dehydro-2,3-deoxyribose 5'-phosphate)-DNA + a 5'-end 5'-phospho-2'-deoxyribonucleoside-DNA + H(+). Involved in base excision repair of DNA damaged by oxidation or by mutagenic agents. Acts as a DNA glycosylase that recognizes and removes damaged bases. Has a preference for oxidized purines, such as 7,8-dihydro-8-oxoguanine (8-oxoG). Has AP (apurinic/apyrimidinic) lyase activity and introduces nicks in the DNA strand. Cleaves the DNA backbone by beta-delta elimination to generate a single-strand break at the site of the removed base with both 3'- and 5'-phosphates. This chain is Formamidopyrimidine-DNA glycosylase, found in Acinetobacter baumannii (strain SDF).